Consider the following 520-residue polypeptide: Biotinidase (520 aa).

The N-terminal stretch at 1-21 (MSGARTAPALFFLGCSALALG) is a signal peptide. In terms of domain architecture, CN hydrolase spans 49–333 (NPLELVSRQE…TGNTTSEMDP (285 aa)). Glu89 acts as the Proton acceptor in catalysis. 3 N-linked (GlcNAc...) asparagine glycosylation sites follow: Asn96, Asn127, and Asn180. The Proton donor role is filled by Lys189. Cys222 functions as the Nucleophile in the catalytic mechanism. Asn326, Asn379, and Asn466 each carry an N-linked (GlcNAc...) asparagine glycan.

Belongs to the carbon-nitrogen hydrolase superfamily. BTD/VNN family.

Its subcellular location is the secreted. The protein localises to the extracellular space. The enzyme catalyses biocytin + H2O = biotin + L-lysine. It carries out the reaction biotin amide + H2O = biotin + NH4(+). Catalytic release of biotin from biocytin, the product of biotin-dependent carboxylases degradation. This Mus musculus (Mouse) protein is Biotinidase (Btd).